A 325-amino-acid chain; its full sequence is Taste receptor type 2 member 7 (325 aa).

Over 1–9 (MADKVQTTL) the chain is Extracellular. Residues 10-30 (LFLAVGEFSVGILGNAFIGLV) traverse the membrane as a helical segment. Over 31-55 (NCMDWVKKRKIASIDLILTSLAISR) the chain is Cytoplasmic. Residues 56 to 76 (ICLLCVILLDCFILVLYPDVY) form a helical membrane-spanning segment. Residues 77–94 (ATGKEMRIIDFFWTLTNH) are Extracellular-facing. A helical membrane pass occupies residues 95–115 (LSIWFATCLSIYYFFRIANFF). Residues 116 to 128 (HPLFLWMKWRIDR) are Cytoplasmic-facing. A helical transmembrane segment spans residues 129 to 149 (VISWILLGCVVLSVFISLPAT). Topologically, residues 150–187 (ENLNADFRFCVKAKRKTNLTWSCRVNKTQHASTKLFLN) are extracellular. Asparagine 167 and asparagine 175 each carry an N-linked (GlcNAc...) asparagine glycan. Residues 188–208 (LATLLPFCVCLMSFFLLILSL) traverse the membrane as a helical segment. The Cytoplasmic portion of the chain corresponds to 209–235 (RRHIRRMQLSATGCRDPSTEAHVRALK). A helical membrane pass occupies residues 236–256 (AVISFLLLFIAYYLSFLVATS). The Extracellular segment spans residues 257-266 (SYFMPETELA). The helical transmembrane segment at 267–287 (VIFGESIALIYPSSHSFILIL) threads the bilayer. The Cytoplasmic segment spans residues 288 to 319 (GNNKLRHASLKVIWKVMSILKGRKFQQHKQIG).

This sequence belongs to the G-protein coupled receptor T2R family.

The protein resides in the membrane. Functionally, gustducin-coupled receptor implicated in the perception of bitter compounds in the oral cavity and the gastrointestinal tract. Signals through PLCB2 and the calcium-regulated cation channel TRPM5. In Pan paniscus (Pygmy chimpanzee), this protein is Taste receptor type 2 member 7 (TAS2R7).